The primary structure comprises 331 residues: UDP-xylose and UDP-N-acetylglucosamine transporter (331 aa).

The next 10 helical transmembrane spans lie at 5-25, 30-50, 59-79, 92-112, 122-142, 153-173, 201-221, 238-260, 267-289, and 301-321; these read FAVTLVFVGCCSNVVFLELLV, GCGNIVTFAQFAFIALEGFIF, PQIPLSNYVIMVTMFFTVSVI, LHMIFRSGSLIANMILGIIIL, LSIVLVSVGIFICTIMSAKQV, GVYAFMHWLLGIAMLTFALLM, CLPLPGFLLLSTNIYNHAVLF, VMWFYLLMNVITQYVCIRGVFIL, LTVTLVVTLRKFLSLIISILYFQ, and AVVFLGTLLYTEVLSSIPAAF.

This sequence belongs to the nucleotide-sugar transporter family. SLC35B subfamily.

The protein resides in the golgi apparatus membrane. Sugar transporter that specifically mediates the transport of UDP-xylose (UDP-Xyl) and UDP-N-acetylglucosamine (UDP-GlcNAc) from cytosol into Golgi. This is UDP-xylose and UDP-N-acetylglucosamine transporter (slc35b4) from Danio rerio (Zebrafish).